A 683-amino-acid polypeptide reads, in one-letter code: uncharacterized protein (683 aa).

Composition is skewed to polar residues over residues 407 to 420 and 512 to 529; these read FETS…TYTP and EGSS…SSEA. Disordered stretches follow at residues 407–427, 509–556, and 621–648; these read FETS…KLST, FSRE…SSTV, and HNTS…DHPD. Residues 531-542 show a composition bias toward low complexity; sequence LPPLLTTTPTPT. 2 stretches are compositionally biased toward polar residues: residues 543–556 and 621–630; these read NTEK…SSTV and HNTSMPNPHH. Positions 633-648 are enriched in basic and acidic residues; it reads VKPEDHPHHPEGDHPD. A helical transmembrane segment spans residues 657–677; it reads IWLLPIAGTIFALVALVIVNI.

It localises to the host membrane. This is an uncharacterized protein from Alcelaphine herpesvirus 1 (strain C500) (AlHV-1).